Reading from the N-terminus, the 334-residue chain is Protein-methionine-sulfoxide reductase catalytic subunit MsrP (334 aa).

The segment at residues 1 to 44 (MKKIRPLTEADVTAESAFFMQRRQVLKALGISAAALSLPSTAQA) is a signal peptide (tat-type signal). Residues Asn-88, 91–92 (YE), Cys-146, Thr-181, Asn-233, Arg-238, and 249–251 (GIK) each bind Mo-molybdopterin.

Belongs to the MsrP family. Heterodimer of a catalytic subunit (MsrP) and a heme-binding subunit (MsrQ). It depends on Mo-molybdopterin as a cofactor. Post-translationally, predicted to be exported by the Tat system. The position of the signal peptide cleavage has not been experimentally proven.

The protein localises to the periplasm. The catalysed reaction is L-methionyl-[protein] + a quinone + H2O = L-methionyl-(S)-S-oxide-[protein] + a quinol. It catalyses the reaction L-methionyl-[protein] + a quinone + H2O = L-methionyl-(R)-S-oxide-[protein] + a quinol. Functionally, part of the MsrPQ system that repairs oxidized periplasmic proteins containing methionine sulfoxide residues (Met-O), using respiratory chain electrons. Thus protects these proteins from oxidative-stress damage caused by reactive species of oxygen and chlorine generated by the host defense mechanisms. MsrPQ is essential for the maintenance of envelope integrity under bleach stress, rescuing a wide series of structurally unrelated periplasmic proteins from methionine oxidation, including the primary periplasmic chaperone SurA and the lipoprotein Pal. The catalytic subunit MsrP is non-stereospecific, being able to reduce both (R-) and (S-) diastereoisomers of methionine sulfoxide. This Salmonella arizonae (strain ATCC BAA-731 / CDC346-86 / RSK2980) protein is Protein-methionine-sulfoxide reductase catalytic subunit MsrP.